A 403-amino-acid polypeptide reads, in one-letter code: Heptahelical transmembrane protein ADIPOR3 (403 aa).

Residues Met1–Thr73 are Cytoplasmic-facing. The chain crosses the membrane as a helical span at residues Leu74–Ala94. Residues Thr95–Pro209 lie on the Extracellular side of the membrane. Residues Phe210 to Leu230 form a helical membrane-spanning segment. The Cytoplasmic portion of the chain corresponds to Ser231 to Tyr246. Residues Ala247–Cys267 traverse the membrane as a helical segment. Over Tyr268–Leu274 the chain is Extracellular. Residues Tyr275–Phe295 traverse the membrane as a helical segment. The Cytoplasmic portion of the chain corresponds to Gln296 to Cys306. A helical membrane pass occupies residues Leu307–Trp327. Topologically, residues His328–Glu331 are extracellular. The chain crosses the membrane as a helical span at residues Ala332–Val352. Over Tyr353–Gln374 the chain is Cytoplasmic. Residues Leu375 to Leu395 traverse the membrane as a helical segment. Residues Lys396–Cys403 are Extracellular-facing.

Belongs to the ADIPOR family.

The protein localises to the membrane. In terms of biological role, may play a role in abiotic stress response. The polypeptide is Heptahelical transmembrane protein ADIPOR3 (ADIPOR3) (Oryza sativa subsp. japonica (Rice)).